The chain runs to 290 residues: Small ribosomal subunit biogenesis GTPase RsgA (290 aa).

A CP-type G domain is found at 61 to 218; that stretch reads KSELVRPTVA…IVDTPGFSTL (158 aa). Residues 110–113 and 161–169 contribute to the GTP site; these read NKID and GPSGAGKST. Zn(2+) contacts are provided by C243, C248, H250, and C256.

Belongs to the TRAFAC class YlqF/YawG GTPase family. RsgA subfamily. As to quaternary structure, monomer. Associates with 30S ribosomal subunit, binds 16S rRNA. Zn(2+) is required as a cofactor.

Its subcellular location is the cytoplasm. Its function is as follows. One of several proteins that assist in the late maturation steps of the functional core of the 30S ribosomal subunit. Helps release RbfA from mature subunits. May play a role in the assembly of ribosomal proteins into the subunit. Circularly permuted GTPase that catalyzes slow GTP hydrolysis, GTPase activity is stimulated by the 30S ribosomal subunit. The protein is Small ribosomal subunit biogenesis GTPase RsgA of Clostridium beijerinckii (strain ATCC 51743 / NCIMB 8052) (Clostridium acetobutylicum).